The following is a 1590-amino-acid chain: MGSTTFENPTRIEILGKEDIIVDFDIWRNFVAEDLLSDLPSSTYVLITDTNLSPLYVPAFQQSFEALAAKSSSTPRLLTYEIPPGENSKSRETKAEIEDWMLSHQCTRDSVIIALGGGVIGDMIGYVAATFMRGVRFVQVPTTLLAMVDSSIGGKTAIDTPLGKNLVGAFWQPQRIYIDLRFLETLPVREFINGMAEVVKTAAIWDEAEFSALEDNANLIMTTIRAKNTDCSTRLGPIRDILKRIVLGSAKTKADVVSADEREGGLRNILNFGHSIGHAFEAILTPQVLHGEAVAIGMVKEAELARHLGVLKPGAVARLVKCIASYGLPTSLADKRIQKLTAGKLCPVDVLLEKMGVDKKNDGRKKKIVLLSAIGKTYEPKASVVEDRSIRVVLSDSVEVRPSVPETLNVEVTPPGSKSISNRALVLAALGTGPCRIKNLLHSDDVEFMLTSIGKLGGATYAWEDAGEVLCVQGKGGDLHASPTELYIGNAGTASRFLTTVVSLCKPSASTKSTILTGNARMKVRPIGPLVDSLRANGVDIEYLEKEHSLPLNVAASGGFTGGDINLAATVSSQYVSSLLMCAPYAKNPVTLRLVGGKPISQLYIDMTTAMMAAFGIHVVRSQTGEHTYHIPQGVYKNPEEYVVESDASSATYPLAVAATSGTTCTIPNIGCKSIQGDARFAIDVLKPTGCKVVQTDYSTTVTGPPIGSLQAIEEVDMEPMTDAFLTASVLGAVAKGTTKIRGIANQRVKECNRIKAMKDELAKFGVTCRELEDGIEVDGVPIKDLKHPAEGIHCYDDHRVAMSFSVLSVAASQPVLIEERECVGKTWPGWWDILSKSFQVELAGKEVKATHSKKIGIPTLPDKSIFIIGMRGAGKTTAGAWAAKILGRPYKDLDVELERISGMSIPDMVRSKGWDFFRAAELDLLKHCLTDQPEKHVFACGGGVVEMPEARELLINFHKSGGIVLLVHRDTEQVMDYLRIDKTRPAYVEDMMGVYSRRKPWFNECSNFQYHSKGSGASALSVAEQDFARFLHHISGKSLHFDEMRNKPQSFFVSLTMPDISGAAYILPSVAVGSDAVEVRVDLLEDPSSTNGIPGTDFLSVQIAHLRSVVHLPVIFTVRTVSQGGRFPDAAHEEALKLYKLAVKMGIEYIDLEIAFPDELLQEVTEAKGFSRIIASHHDPQGTLSWKNGGWFQHYNRALQYGDIIKLVGSAKSIEDNFALAKFKKTMAAAHDTPLIAINMGVTGKLSRVLNGFMTPVSHPSLPFKAAPGQLSAAEIRSTLSTLGEIEPKSFYLFGTPISQSRSPALHNTLFKQTGLPHRYSRLETDRVADVQDVIRAPDFGGASVTIPLKLDIIPLLDSVTDAVKVIGAVNTIIPTPDNPPRLVGENTDWLGMTHSLMSASHTPSPVDSPSPALVIGAGGTARAAIYALHSLGHSPIYMVARTPSKLDTLINSFPSSFNIIPLPSTTSATELTTPPAVAISTIPADRPIESNMRETLAVLLRHEKKDEGKQRTLLEMAYKPSQTPLMRMAEDAGWVAIPGLEVLSAQGWYQVSLFPFHLLVCYEVIFLNGFTKIYRLVSKMDKHPTFVC.

The tract at residues 1–387 is 3-dehydroquinate synthase; it reads MGSTTFENPT…YEPKASVVED (387 aa). NAD(+)-binding positions include 49-51, 86-89, 117-119, and Asp122; these read DTN, ENSK, and GGV. Position 133 (Arg133) interacts with 7-phospho-2-dehydro-3-deoxy-D-arabino-heptonate. Position 142-143 (142-143) interacts with NAD(+); sequence TT. 7-phospho-2-dehydro-3-deoxy-D-arabino-heptonate is bound by residues Asp149 and Lys155. Lys164 lines the NAD(+) pocket. Position 165 (Asn165) interacts with 7-phospho-2-dehydro-3-deoxy-D-arabino-heptonate. Residues 182-185 and Asn193 contribute to the NAD(+) site; that span reads FLET. Glu197 lines the Zn(2+) pocket. Residues 197-200 and Lys253 each bind 7-phospho-2-dehydro-3-deoxy-D-arabino-heptonate; that span reads EVVK. Residue Glu263 is the Proton acceptor; for 3-dehydroquinate synthase activity of the active site. Residues 267 to 271 and His274 each bind 7-phospho-2-dehydro-3-deoxy-D-arabino-heptonate; that span reads RNILN. His274 is a binding site for Zn(2+). Residue His278 is the Proton acceptor; for 3-dehydroquinate synthase activity of the active site. Positions 290 and 359 each coordinate 7-phospho-2-dehydro-3-deoxy-D-arabino-heptonate. His290 is a binding site for Zn(2+). Residues 400–841 form an EPSP synthase region; that stretch reads VRPSVPETLN…WDILSKSFQV (442 aa). Cys823 (for EPSP synthase activity) is an active-site residue. A shikimate kinase region spans residues 863 to 1055; that stretch reads DKSIFIIGMR…RNKPQSFFVS (193 aa). 870-877 contacts ATP; that stretch reads GMRGAGKT. A 3-dehydroquinase region spans residues 1056–1276; sequence LTMPDISGAA…AAPGQLSAAE (221 aa). His1179 (proton acceptor; for 3-dehydroquinate dehydratase activity) is an active-site residue. Lys1207 functions as the Schiff-base intermediate with substrate; for 3-dehydroquinate dehydratase activity in the catalytic mechanism. The tract at residues 1289–1590 is shikimate dehydrogenase; sequence PKSFYLFGTP…KMDKHPTFVC (302 aa).

It in the N-terminal section; belongs to the sugar phosphate cyclases superfamily. Dehydroquinate synthase family. This sequence in the 2nd section; belongs to the EPSP synthase family. In the 3rd section; belongs to the shikimate kinase family. The protein in the 4th section; belongs to the type-I 3-dehydroquinase family. It in the C-terminal section; belongs to the shikimate dehydrogenase family. As to quaternary structure, homodimer. It depends on Zn(2+) as a cofactor.

Its subcellular location is the cytoplasm. The enzyme catalyses 7-phospho-2-dehydro-3-deoxy-D-arabino-heptonate = 3-dehydroquinate + phosphate. It catalyses the reaction 3-dehydroquinate = 3-dehydroshikimate + H2O. It carries out the reaction shikimate + NADP(+) = 3-dehydroshikimate + NADPH + H(+). The catalysed reaction is shikimate + ATP = 3-phosphoshikimate + ADP + H(+). The enzyme catalyses 3-phosphoshikimate + phosphoenolpyruvate = 5-O-(1-carboxyvinyl)-3-phosphoshikimate + phosphate. The protein operates within metabolic intermediate biosynthesis; chorismate biosynthesis; chorismate from D-erythrose 4-phosphate and phosphoenolpyruvate: step 2/7. It functions in the pathway metabolic intermediate biosynthesis; chorismate biosynthesis; chorismate from D-erythrose 4-phosphate and phosphoenolpyruvate: step 3/7. Its pathway is metabolic intermediate biosynthesis; chorismate biosynthesis; chorismate from D-erythrose 4-phosphate and phosphoenolpyruvate: step 4/7. It participates in metabolic intermediate biosynthesis; chorismate biosynthesis; chorismate from D-erythrose 4-phosphate and phosphoenolpyruvate: step 5/7. The protein operates within metabolic intermediate biosynthesis; chorismate biosynthesis; chorismate from D-erythrose 4-phosphate and phosphoenolpyruvate: step 6/7. Functionally, the AROM polypeptide catalyzes 5 consecutive enzymatic reactions in prechorismate polyaromatic amino acid biosynthesis. The sequence is that of Pentafunctional AROM polypeptide from Sclerotinia sclerotiorum (White mold).